The chain runs to 446 residues: Putative zinc metalloprotease NMA0084 (446 aa).

Residue His18 coordinates Zn(2+). The active site involves Glu19. His22 is a binding site for Zn(2+). 3 consecutive transmembrane segments (helical) span residues 93–115 (IAIVAAGPLTNLALAVLLYGLSF), 376–398 (FLALVSISLGVLNLLPVPVLDGG), and 419–438 (NIGLRFGLALMMLMMAVAFF). The 82-residue stretch at 100 to 181 (PLTNLALAVL…KVAVGVQTAS (82 aa)) folds into the PDZ domain.

Belongs to the peptidase M50B family. The cofactor is Zn(2+).

The protein resides in the cell inner membrane. This chain is Putative zinc metalloprotease NMA0084, found in Neisseria meningitidis serogroup A / serotype 4A (strain DSM 15465 / Z2491).